A 201-amino-acid polypeptide reads, in one-letter code: Pyrrolidone-carboxylate peptidase (201 aa).

Active-site residues include E81, C143, and H168.

This sequence belongs to the peptidase C15 family. Homotetramer.

Its subcellular location is the cytoplasm. It carries out the reaction Release of an N-terminal pyroglutamyl group from a polypeptide, the second amino acid generally not being Pro.. In terms of biological role, removes 5-oxoproline from various penultimate amino acid residues except L-proline. The sequence is that of Pyrrolidone-carboxylate peptidase (pcp) from Halalkalibacterium halodurans (strain ATCC BAA-125 / DSM 18197 / FERM 7344 / JCM 9153 / C-125) (Bacillus halodurans).